The chain runs to 180 residues: High mobility group protein B1 (180 aa).

Residues 1–8 (VNFSEFSK) carry the Nuclear localization signal (NLS) 1 motif. Positions 1–44 (VNFSEFSKKCSERWKTMSAKEKGKFEDMAKADKARYEREMKTYI) form a DNA-binding region, HMG box 1. The residue at position 8 (lysine 8) is an N6-acetyllysine. Isoglutamyl lysine isopeptide (Lys-Gln) (interchain with Q-?) cross-links involve residues lysine 8 and lysine 9. Residue cysteine 10 is modified to Cysteine sulfonic acid (-SO3H). Residue lysine 33 forms an Isoglutamyl lysine isopeptide (Lys-Gln) (interchain with Q-?) linkage. Residues 45-61 (PPKGETKKKFKDPNAPK) are LPS binding (Lipid A). The tract at residues 54–73 (FKDPNAPKRPPSAFFLFCSE) is cytokine-stimulating activity. At lysine 55 the chain carries N6-acetyllysine. A DNA-binding region (HMG box 2) is located at residues 60-128 (PKRPPSAFFL…KYEKDIAAYR (69 aa)). Serine 65 carries the phosphoserine modification. Cysteine sulfonic acid (-SO3H) is present on cysteine 71. 7 positions are modified to N6-acetyllysine: lysine 92, lysine 93, lysine 106, lysine 137, lysine 138, lysine 142, and lysine 145. The tract at residues 115–148 (KLKEKYEKDIAAYRAKGKPDAAKKGVVKAEKSKK) is binding to AGER/RAGE. The span at 126-144 (AYRAKGKPDAAKKGVVKAE) shows a compositional bias: basic and acidic residues. The disordered stretch occupies residues 126–180 (AYRAKGKPDAAKKGVVKAEKSKKKKEEEDDEEDEEDEEEEEEEEDEDEEEDDDDE). The Nuclear localization signal (NLS) 2 motif lies at 143-149 (AEKSKKK). Residues 143 to 149 (AEKSKKK) form an NLS 2 region. An Isoglutamyl lysine isopeptide (Lys-Gln) (interchain with Q-?) cross-link involves residue lysine 145. Position 146 is an ADP-ribosylserine (serine 146). N6-acetyllysine is present on residues lysine 147, lysine 148, lysine 149, and lysine 150. Residues lysine 147, lysine 148, and lysine 149 each participate in an isoglutamyl lysine isopeptide (Lys-Gln) (interchain with Q-?) cross-link. A compositionally biased stretch (acidic residues) spans 152–180 (EEDDEEDEEDEEEEEEEEDEDEEEDDDDE).

Belongs to the HMGB family. Interacts (fully reduced HMGB1) with CXCL12; probably in a 1:2 ratio involving two molecules of CXCL12, each interacting with one HMG box of HMGB1; inhibited by glycyrrhizin. Associates with the TLR4:LY96 receptor complex. Component of the RAG complex composed of core components RAG1 and RAG2, and associated component HMGB1 or HMGB2. Interacts (in cytoplasm upon starvation) with BECN1; inhibits the interaction of BECN1 and BCL2 leading to promotion of autophagy. Interacts with KPNA1; involved in nuclear import. Interacts with SREBF1, TLR2, TLR4, TLR9, PTPRZ1, APEX1, FEN1, POLB, TERT. Interacts with IL1B, AGER, MSH2, XPA, XPC, HNF1A, TP53. Interacts with CD24; the probable CD24:SIGLEC10 complex is proposed to inhibit HGMB1-mediated tissue damage immune response. Interacts with THBD; prevents HGMB1 interaction with ACER/RAGE and inhibits HGMB1 pro-inflammatory activity. Interacts with HAVCR2; impairs HMGB1 binding to B-DNA and likely HMGB1-mediated innate immune response. Interacts with XPO1; mediating nuclear export. Interacts with receptor RAGE/AGER. Post-translationally, phosphorylated at serine residues. Phosphorylation in both NLS regions is required for cytoplasmic translocation followed by secretion. In terms of processing, acetylated on multiple sites upon stimulation with LPS. Acetylation on lysine residues in the nuclear localization signals (NLS 1 and NLS 2) leads to cytoplasmic localization and subsequent secretion. Reduction/oxidation of cysteine residues and a possible intramolecular disulfide bond give rise to different redox forms with specific functional activities in various cellular compartments: 1- fully reduced HMGB1 (HMGB1C23hC45hC106h), 2-disulfide HMGB1 (HMGB1C23-C45C106h) and 3- sulfonyl HMGB1 (HMGB1C23soC45soC106so). Post-translationally, poly-ADP-ribosylated by PARP1 when secreted following stimulation with LPS. In terms of processing, in vitro cleavage by CASP1 is liberating a HMG box 1-containing peptide which may mediate immunogenic activity; the peptide antagonizes apoptosis-induced immune tolerance. Can be proteolytically cleaved by a thrombin:thrombomodulin complex; reduces binding to heparin and pro-inflammatory activities. Forms covalent cross-links mediated by transglutaminase TGM2, between a glutamine and the epsilon-amino group of a lysine residue, forming homopolymers and heteropolymers.

Its subcellular location is the nucleus. It localises to the chromosome. It is found in the cytoplasm. The protein localises to the secreted. The protein resides in the cell membrane. Its subcellular location is the endosome. It localises to the endoplasmic reticulum-Golgi intermediate compartment. In terms of biological role, multifunctional redox sensitive protein with various roles in different cellular compartments. In the nucleus is one of the major chromatin-associated non-histone proteins and acts as a DNA chaperone involved in replication, transcription, chromatin remodeling, V(D)J recombination, DNA repair and genome stability. Proposed to be an universal biosensor for nucleic acids. Promotes host inflammatory response to sterile and infectious signals and is involved in the coordination and integration of innate and adaptive immune responses. In the cytoplasm functions as a sensor and/or chaperone for immunogenic nucleic acids implicating the activation of TLR9-mediated immune responses, and mediates autophagy. Acts as a danger-associated molecular pattern (DAMP) molecule that amplifies immune responses during tissue injury. Released to the extracellular environment can bind DNA, nucleosomes, IL-1 beta, CXCL12, AGER isoform 2/sRAGE, lipopolysaccharide (LPS) and lipoteichoic acid (LTA), and activates cells through engagement of multiple surface receptors. In the extracellular compartment fully reduced HMGB1 (released by necrosis) acts as a chemokine, disulfide HMGB1 (actively secreted) as a cytokine, and sulfonyl HMGB1 (released from apoptotic cells) promotes immunological tolerance. Has proangiogenic activity. May be involved in platelet activation. Binds to phosphatidylserine and phosphatidylethanolamide. Bound to RAGE mediates signaling for neuronal outgrowth. May play a role in accumulation of expanded polyglutamine (polyQ) proteins. Its function is as follows. Nuclear functions are attributed to fully reduced HGMB1. Associates with chromatin and binds DNA with a preference to non-canonical DNA structures such as single-stranded DNA, DNA-containing cruciforms or bent structures, supercoiled DNA and ZDNA. Can bent DNA and enhance DNA flexibility by looping thus providing a mechanism to promote activities on various gene promoters by enhancing transcription factor binding and/or bringing distant regulatory sequences into close proximity. May be involved in nucleotide excision repair (NER), mismatch repair (MMR) and base excision repair (BER) pathways, and double strand break repair such as non-homologous end joining (NHEJ). Involved in V(D)J recombination by acting as a cofactor of the RAG complex: acts by stimulating cleavage and RAG protein binding at the 23 bp spacer of conserved recombination signal sequences (RSS). In vitro can displace histone H1 from highly bent DNA. Can restructure the canonical nucleosome leading to relaxation of structural constraints for transcription factor-binding. Enhances binding of sterol regulatory element-binding proteins (SREBPs) such as SREBF1 to their cognate DNA sequences and increases their transcriptional activities. Facilitates binding of TP53 to DNA. May be involved in mitochondrial quality control and autophagy in a transcription-dependent fashion implicating HSPB1. Can modulate the activity of the telomerase complex and may be involved in telomere maintenance. In the cytoplasm proposed to dissociate the BECN1:BCL2 complex via competitive interaction with BECN1 leading to autophagy activation. Can protect BECN1 and ATG5 from calpain-mediated cleavage and thus proposed to control their proautophagic and proapoptotic functions and to regulate the extent and severity of inflammation-associated cellular injury. In myeloid cells has a protective role against endotoxemia and bacterial infection by promoting autophagy. Involved in endosomal translocation and activation of TLR9 in response to CpG-DNA in macrophages. Functionally, in the extracellular compartment (following either active secretion or passive release) involved in regulation of the inflammatory response. Fully reduced HGMB1 (which subsequently gets oxidized after release) in association with CXCL12 mediates the recruitment of inflammatory cells during the initial phase of tissue injury; the CXCL12:HMGB1 complex triggers CXCR4 homodimerization. Induces the migration of monocyte-derived immature dendritic cells and seems to regulate adhesive and migratory functions of neutrophils implicating AGER/RAGE and ITGAM. Can bind to various types of DNA and RNA including microbial unmethylated CpG-DNA to enhance the innate immune response to nucleic acids. Proposed to act in promiscuous DNA/RNA sensing which cooperates with subsequent discriminative sensing by specific pattern recognition receptors. Promotes extracellular DNA-induced AIM2 inflammasome activation implicating AGER/RAGE. Disulfide HMGB1 binds to transmembrane receptors, such as AGER/RAGE, TLR2, TLR4 and probably TREM1, thus activating their signal transduction pathways. Mediates the release of cytokines/chemokines such as TNF, IL-1, IL-6, IL-8, CCL2, CCL3, CCL4 and CXCL10. Promotes secretion of interferon-gamma by macrophage-stimulated natural killer (NK) cells in concert with other cytokines like IL-2 or IL-12. TLR4 is proposed to be the primary receptor promoting macrophage activation and signaling through TLR4 seems to implicate LY96/MD-2. In bacterial LPS- or LTA-mediated inflammatory responses binds to the endotoxins and transfers them to CD14 for signaling to the respective TLR4:LY96 and TLR2 complexes. Contributes to tumor proliferation by association with ACER/RAGE. Can bind to IL1-beta and signals through the IL1R1:IL1RAP receptor complex. Binding to class A CpG activates cytokine production in plasmacytoid dendritic cells implicating TLR9, MYD88 and AGER/RAGE and can activate autoreactive B cells. Via HMGB1-containing chromatin immune complexes may also promote B cell responses to endogenous TLR9 ligands through a B-cell receptor (BCR)-dependent and ACER/RAGE-independent mechanism. Inhibits phagocytosis of apoptotic cells by macrophages; the function is dependent on poly-ADP-ribosylation and involves binding to phosphatidylserine on the cell surface of apoptotic cells. In adaptive immunity may be involved in enhancing immunity through activation of effector T-cells and suppression of regulatory T (TReg) cells. In contrast, without implicating effector or regulatory T-cells, required for tumor infiltration and activation of T-cells expressing the lymphotoxin LTA:LTB heterotrimer thus promoting tumor malignant progression. Also reported to limit proliferation of T-cells. Released HMGB1:nucleosome complexes formed during apoptosis can signal through TLR2 to induce cytokine production. Involved in induction of immunological tolerance by apoptotic cells; its pro-inflammatory activities when released by apoptotic cells are neutralized by reactive oxygen species (ROS)-dependent oxidation specifically on Cys-106. During macrophage activation by activated lymphocyte-derived self apoptotic DNA (ALD-DNA) promotes recruitment of ALD-DNA to endosomes. This chain is High mobility group protein B1 (HMGB1), found in Cricetulus griseus (Chinese hamster).